The primary structure comprises 642 residues: Threonine--tRNA ligase (642 aa).

A TGS domain is found at 1-61 (MPVITLPDGS…ESDAQLAIIT (61 aa)). Residues 243 to 534 (DHRKIGKQLD…LTEEYAGFFP (292 aa)) form a catalytic region. Residues Cys-334, His-385, and His-511 each contribute to the Zn(2+) site.

The protein belongs to the class-II aminoacyl-tRNA synthetase family. As to quaternary structure, homodimer. Zn(2+) is required as a cofactor.

The protein resides in the cytoplasm. The enzyme catalyses tRNA(Thr) + L-threonine + ATP = L-threonyl-tRNA(Thr) + AMP + diphosphate + H(+). Its function is as follows. Catalyzes the attachment of threonine to tRNA(Thr) in a two-step reaction: L-threonine is first activated by ATP to form Thr-AMP and then transferred to the acceptor end of tRNA(Thr). Also edits incorrectly charged L-seryl-tRNA(Thr). The chain is Threonine--tRNA ligase from Yersinia pseudotuberculosis serotype O:1b (strain IP 31758).